The chain runs to 221 residues: Orotidine 5'-phosphate decarboxylase (221 aa).

Residues Asp12, Lys34, 60 to 69 (DFKVADIPNT), Ser117, 170 to 180 (PGVGAQGGKAS), Gly193, and Arg194 contribute to the substrate site. Lys62 functions as the Proton donor in the catalytic mechanism.

It belongs to the OMP decarboxylase family. Type 1 subfamily. As to quaternary structure, homodimer.

It carries out the reaction orotidine 5'-phosphate + H(+) = UMP + CO2. The protein operates within pyrimidine metabolism; UMP biosynthesis via de novo pathway; UMP from orotate: step 2/2. Functionally, catalyzes the decarboxylation of orotidine 5'-monophosphate (OMP) to uridine 5'-monophosphate (UMP). The polypeptide is Orotidine 5'-phosphate decarboxylase (Methanosarcina barkeri (strain Fusaro / DSM 804)).